Consider the following 939-residue polypeptide: Progesterone receptor (939 aa).

Residues 1-11 (MTERTGKDARA) are compositionally biased toward basic and acidic residues. Residues 1-174 (MTERTGKDAR…RSSQGAACPL (174 aa)) are AF3; mediates transcriptional activation (in isoform B). The segment at 1–302 (MTERTGKDAR…AEQDAPAPGC (302 aa)) is disordered. The interval 1–572 (MTERTGKDAR…YSFESLPQKI (572 aa)) is modulating, Ala/Pro-rich. Residue Lys7 forms a Glycyl lysine isopeptide (Lys-Gly) (interchain with G-Cter in SUMO) linkage. Residues 15 to 26 (AGGAPSPAPAAE) show a composition bias toward low complexity. Ser20 is subject to Phosphoserine. A compositionally biased stretch (basic and acidic residues) spans 27-36 (PESRRRDGGR). Over residues 49–67 (AAAAAAAAAAASAAPSAPS) the composition is skewed to low complexity. Residue Ser141 is modified to Phosphoserine. Residues 175–314 (MSRPEGKAGD…LATTMMDFIH (140 aa)) are mediates transcriptional transrepression (in isoform A). A Nuclear localization signal motif is present at residues 193-197 (KGPPR). Ser200 carries the phosphoserine modification. Low complexity-rich tracts occupy residues 211–230 (GAHAWPGAAGKAATQPAALG) and 257–278 (PAAAAGAAPAAPGTAPGGTAPV). Ser303 bears the Phosphoserine; by MAPK1 mark. Ser349 bears the Phosphoserine; by MAPK mark. A Glycyl lysine isopeptide (Lys-Gly) (interchain with G-Cter in SUMO); alternate cross-link involves residue Lys392. A Glycyl lysine isopeptide (Lys-Gly) (interchain with G-Cter in ubiquitin); alternate cross-link involves residue Lys392. The residue at position 404 (Ser404) is a Phosphoserine; by CDK2. The interval 463–552 (PALECVLYKA…VYQPYLNYLR (90 aa)) is AF1; mediates transcriptional activation. Lys537 participates in a covalent cross-link: Glycyl lysine isopeptide (Lys-Gly) (interchain with G-Cter in SUMO). NR C4-type zinc fingers lie at residues 573–593 (CLICGDEASGCHYGVLTCGSC) and 609–633 (CAGRNDCIVDKIRRKNCPACRLRKC). A DNA-binding region (nuclear receptor) is located at residues 573-645 (CLICGDEASG…AGMVLGGRKF (73 aa)). Ser682 carries the post-translational modification Phosphoserine. An NR LBD domain is found at 685–919 (QDIQLIPPLI…EFPEMMSEVI (235 aa)). The interval 693–939 (LINLLMSIEP…MVKPLLFHKK (247 aa)) is AF2; mediates transcriptional activation.

This sequence belongs to the nuclear hormone receptor family. NR3 subfamily. Interacts with SMARD1 and UNC45A. Interacts with CUEDC2; the interaction promotes ubiquitination, decreases sumoylation, and represses transcriptional activity. Interacts with PIAS3; the interaction promotes sumoylation of PR in a hormone-dependent manner, inhibits DNA-binding, and alters nuclear export. Interacts with SP1; the interaction requires ligand-induced phosphorylation on Ser-349 by ERK1/2-MAPK. Interacts with PRMT2. Isoform A interacts with NCOR2. Isoform B (but not isoform A) interacts with NCOA2 and NCOA1. Isoform B (but not isoform A) interacts with KLF9. Interacts with GTF2B. Post-translationally, phosphorylated on multiple serine sites. Several of these sites are hormone-dependent. Phosphorylation on Ser-303 occurs preferentially on isoform B, is highly hormone-dependent and modulates ubiquitination and sumoylation on Lys-392. Phosphorylation on Ser-303 and Ser-349 also requires induction by hormone. Basal phosphorylation on Ser-200 and Ser-404 is increased in response to progesterone and can be phosphorylated in vitro by the CDK2-A1 complex. Increased levels of phosphorylation on Ser-404 also in the presence of EGF, heregulin, IGF, PMA and FBS. Phosphorylation at this site by CDK2 is ligand-independent, and increases nuclear translocation and transcriptional activity. Phosphorylation at Ser-303, but not at Ser-200, is impaired during the G(2)/M phase of the cell cycle. Phosphorylation on Ser-349 by ERK1/2 MAPK is required for interaction with SP1. In terms of processing, sumoylation is hormone-dependent and represses transcriptional activity. Sumoylation on all three sites is enhanced by PIAS3. Desumoylated by SENP1. Sumoylation on Lys-392, the main site of sumoylation, is repressed by ubiquitination on the same site, and modulated by phosphorylation at Ser-303. Ubiquitination is hormone-dependent and represses sumoylation on the same site. Promoted by MAPK-mediated phosphorylation on Ser-303. Post-translationally, palmitoylated by ZDHHC7 and ZDHHC21. Palmitoylation is required for plasma membrane targeting and for rapid intracellular signaling via ERK and AKT kinases and cAMP generation. In terms of tissue distribution, expressed in mammary gland and uterus.

It is found in the nucleus. The protein localises to the cytoplasm. The steroid hormones and their receptors are involved in the regulation of eukaryotic gene expression and affect cellular proliferation and differentiation in target tissues. Depending on the isoform, progesterone receptor functions as a transcriptional activator or repressor. In terms of biological role, ligand-dependent transdominant repressor of steroid hormone receptor transcriptional activity including repression of its isoform B, MR and ER. Transrepressional activity may involve recruitment of corepressor NCOR2. Functionally, transcriptional activator of several progesteron-dependent promoters in a variety of cell types. Involved in activation of SRC-dependent MAPK signaling on hormone stimulation. In Canis lupus familiaris (Dog), this protein is Progesterone receptor (PGR).